A 162-amino-acid chain; its full sequence is Mitochondrial fission process protein 1 (162 aa).

3 helical membrane passes run 36–56 (SLVKPVVVKFSYVVAFGYVAA), 81–101 (AIIAVDTVLWQTFASVLIPGF), and 128–148 (TVTALGLATIPFIVHPIDAFV).

The protein belongs to the MTFP1 family.

Its subcellular location is the mitochondrion inner membrane. Involved in the mitochondrial division probably by regulating membrane fission. Loss-of-function leads to apoptosis. This Caenorhabditis briggsae protein is Mitochondrial fission process protein 1.